Consider the following 430-residue polypeptide: Adenylosuccinate synthetase (430 aa).

GTP-binding positions include 12 to 18 (GDEGKGK) and 40 to 42 (GHT). The active-site Proton acceptor is the Asp-13. The Mg(2+) site is built by Asp-13 and Gly-40. IMP contacts are provided by residues 13–16 (DEGK), 38–41 (NAGH), Thr-128, Arg-142, Gln-223, Thr-238, and Arg-302. The active-site Proton donor is His-41. 298–304 (TTTGRPR) serves as a coordination point for substrate. Residues Arg-304, 330-332 (SID), and 412-414 (SVG) contribute to the GTP site.

This sequence belongs to the adenylosuccinate synthetase family. In terms of assembly, homodimer. Mg(2+) is required as a cofactor.

It localises to the cytoplasm. It carries out the reaction IMP + L-aspartate + GTP = N(6)-(1,2-dicarboxyethyl)-AMP + GDP + phosphate + 2 H(+). It participates in purine metabolism; AMP biosynthesis via de novo pathway; AMP from IMP: step 1/2. Its function is as follows. Plays an important role in the de novo pathway of purine nucleotide biosynthesis. Catalyzes the first committed step in the biosynthesis of AMP from IMP. The chain is Adenylosuccinate synthetase from Streptococcus agalactiae serotype Ia (strain ATCC 27591 / A909 / CDC SS700).